The following is an 815-amino-acid chain: MFKLTRNKDEQSGSATFAMPLLPLRDIVVFPSMVVPLFVGRDKSVNALDKAMATDKKIFLAAQTKAKTDTPGESDIYRVGTVANILQILRLPDGTVKVLVEGDFRARISSFIPHPDHFFVSLEGLEESEDESVEIEALRRGVRAAFDAYSKHNKKINQEILDAVAAIDNASRLADTIAAYMPFKLDVKQKLLETLGVAKRLEKLFGQIRSEIEILQTEERIKGRVKKQMEKTQREYYLNEQMRAIQKEMGEKDDFKSELEELEKRIKRKKLSQEAAAKVRAEFKKLKLMSPMSAEATVVRNYIDWILSLPWYEKTRDKLDIDESIRILDEDHYGLEKPKERIIEYLAVQALVKRIKGPILCFVGPPGVGKTSLAKSIARAMNRNFIRLSLGGVRDEAEIRGHRRTYIGAMPGKIIQSLKKVKSNNPVFCLDEVDKMSMDFRGDPSAALLEVLDPEQNFSFNDHYLDLDYDLSEVFFITTANNLHSIPPPLRDRMEIIQIAGYTEFDKLNIGRNFLVAKQCKANGLSLDNIAFSDDMLLYIIRHYTKEAGVRNLEREIASICRKVAKEVVRRGPETRIELTEDLVQEYLGIPKFRYGVAEEKDEIGLAVGLAWTEFGGDILGIETVVMPGKGKVQITGKLGDVMQESAQAALSYVRSRAKRLGIDPDFYQNFDIHVHVPEGAIPKDGPSAGITMATSIVSALARIPVRSDLAMTGEITLRGRVLPIGGLKEKILAAHRALLKTVLIPKDNAKDLKDIPAKILEEIQVELVEHMDDVLRKAMVVPEDRELFHEEEAGAQQAVMFEQKPPAADEIRAH.

Residues 19–212 (MPLLPLRDIV…KLFGQIRSEI (194 aa)) form the Lon N-terminal domain. 364 to 371 (GPPGVGKT) is a binding site for ATP. The region spanning 601–782 (KDEIGLAVGL…DDVLRKAMVV (182 aa)) is the Lon proteolytic domain. Residues Ser-688 and Lys-731 contribute to the active site. Residues 793-815 (EAGAQQAVMFEQKPPAADEIRAH) form a disordered region.

The protein belongs to the peptidase S16 family. Homohexamer. Organized in a ring with a central cavity.

It localises to the cytoplasm. It catalyses the reaction Hydrolysis of proteins in presence of ATP.. ATP-dependent serine protease that mediates the selective degradation of mutant and abnormal proteins as well as certain short-lived regulatory proteins. Required for cellular homeostasis and for survival from DNA damage and developmental changes induced by stress. Degrades polypeptides processively to yield small peptide fragments that are 5 to 10 amino acids long. Binds to DNA in a double-stranded, site-specific manner. This is Lon protease 1 from Syntrophobacter fumaroxidans (strain DSM 10017 / MPOB).